Here is a 213-residue protein sequence, read N- to C-terminus: Peptidyl-tRNA hydrolase (213 aa).

A tRNA-binding site is contributed by Y15. H20 (proton acceptor) is an active-site residue. TRNA is bound by residues Y66, N68, and N114. Residues 186–213 (MHAKPPRPKPPRPVTAPGAPVPPTEPSA) are disordered. A compositionally biased stretch (pro residues) spans 196 to 213 (PRPVTAPGAPVPPTEPSA).

This sequence belongs to the PTH family. Monomer.

The protein localises to the cytoplasm. It carries out the reaction an N-acyl-L-alpha-aminoacyl-tRNA + H2O = an N-acyl-L-amino acid + a tRNA + H(+). In terms of biological role, hydrolyzes ribosome-free peptidyl-tRNAs (with 1 or more amino acids incorporated), which drop off the ribosome during protein synthesis, or as a result of ribosome stalling. Catalyzes the release of premature peptidyl moieties from peptidyl-tRNA molecules trapped in stalled 50S ribosomal subunits, and thus maintains levels of free tRNAs and 50S ribosomes. The protein is Peptidyl-tRNA hydrolase of Leptothrix cholodnii (strain ATCC 51168 / LMG 8142 / SP-6) (Leptothrix discophora (strain SP-6)).